We begin with the raw amino-acid sequence, 83 residues long: Small ribosomal subunit protein bS16 (83 aa).

This sequence belongs to the bacterial ribosomal protein bS16 family.

The chain is Small ribosomal subunit protein bS16 from Shewanella baltica (strain OS223).